The primary structure comprises 530 residues: S-adenosylhomocysteine hydrolase-like protein 1 (530 aa).

N-acetylmethionine is present on methionine 1. Residue serine 2 is modified to N-acetylserine. A Phosphoserine modification is found at serine 2. Position 40 is an N6-acetyllysine (lysine 40). The disordered stretch occupies residues 53 to 103 (KFPTKTGRRSLSRSISQSSTDSYSSAASYTDSSDDEVSPREKQQTNSKGSS). Low complexity predominate over residues 64–83 (SRSISQSSTDSYSSAASYTD). Positions 65–92 (RSISQSSTDSYSSAASYTDSSDDEVSPR) are PEST. Phosphoserine is present on residues serine 68, serine 71, serine 74, serine 77, and serine 84. The interaction with BCL2L10 stretch occupies residues 138–201 (QGEKPLAGAK…EAGVAVFAWK (64 aa)). 5 residues coordinate substrate: threonine 155, aspartate 229, glutamate 254, lysine 284, and aspartate 288. An NAD binding region spans residues 281–448 (SVTKQKFDNL…EGRLLNLSCS (168 aa)). NAD(+)-binding positions include 318-322 (GYGEV), glutamate 341, and asparagine 376. Serine 391 carries the post-translational modification Phosphoserine. 397–399 (MGH) contacts NAD(+). Residues 520–530 (NGPFKPNYYRY) form a PDZ-binding region.

Belongs to the adenosylhomocysteinase family. Forms multimers. Forms heteromultimers with AHCYL2 (via the C-terminal region). Interacts (when phosphorylated) with ITPR1 (when not phosphorylated); the interaction suppresses inositol 1,4,5-trisphosphate binding to ITPR1. Interacts with BCL2L10; this strengthens the interaction of AHCYL1 with ITPR1. Interacts with CFTR and SLC26A6; the interactions take place once AHCYL1 is released from ITPR1 and increase CFTR and SLC26A6 activities. Interacts with RRM1; in a phosphorylation- and (dATP)-dependent manner. Interacts (via PEST domain when phosphorylated) with SLC4A4 isoform 1 but not isoform 2; the interaction increases SLC4A4 isoform 1 activity. Interacts (when phosphorylated) with SLC9A3; the interaction is required for SLC9A3 apical location and activity. Interacts (when phosphorylated) with FIP1L1; the interaction is direct and associates AHCYL1 with the CPSF complex and RNA. Interacts with PAPOLA. Interacts with ZCCHC4. Interacts with AHCY. Requires NAD(+) as cofactor. In terms of processing, phosphorylated at Ser/Thr residues between Ser-68 and Thr-72 in the PEST region: required for interaction with dATP-bound RRM1 and ITPR1. Phosphorylation at Ser-68 by PRKD1 and CAMK4 is required for further phosphorylations by CSNK1A1. Phosphorylation is induced by oxidative stress. Probably phosphorylated by CAMK2A; phosphorylation at Ser-68 may be required for interaction with SLC9A3. Dephosphorylated in response to apoptotic stress conditions which causes translocation of both AHCYL1 and BCL2L10 from mitochondria-associated endoplasmic reticulum membranes and promotes apoptosis. Expressed in dendritic cells.

The protein resides in the endoplasmic reticulum. The protein localises to the cytoplasm. It is found in the cytosol. Its subcellular location is the apical cell membrane. It localises to the microsome. Functionally, multifaceted cellular regulator which coordinates several essential cellular functions including regulation of epithelial HCO3(-) and fluid secretion, mRNA processing and DNA replication. Regulates ITPR1 sensitivity to inositol 1,4,5-trisphosphate, competing for the common binding site and acting as endogenous 'pseudoligand' whose inhibitory activity can be modulated by its phosphorylation status. Promotes the formation of contact points between the endoplasmic reticulum (ER) and mitochondria, facilitating transfer of Ca(2+) from the ER to mitochondria. Under normal cellular conditions, functions cooperatively with BCL2L10 to limit ITPR1-mediated Ca(2+) release but, under apoptotic stress conditions, dephosphorylated which promotes dissociation of both AHCYL1 and BCL2L10 from mitochondria-associated endoplasmic reticulum membranes, inhibits BCL2L10 interaction with ITPR1 and leads to increased Ca(2+) transfer to mitochondria which promotes apoptosis. In the pancreatic and salivary ducts, at resting state, attenuates inositol 1,4,5-trisphosphate-induced calcium release by interacting with ITPR1. When extracellular stimuli induce ITPR1 phosphorylation or inositol 1,4,5-trisphosphate production, dissociates from ITPR1 to interact with CFTR and SLC26A6, mediating their synergistic activation by calcium and cAMP that stimulates the epithelial secretion of electrolytes and fluid. Also activates basolateral SLC4A4 isoform 1 to coordinate fluid and HCO3(-) secretion. Inhibits the effect of STK39 on SLC4A4 and CFTR by recruiting PP1 phosphatase which activates SLC4A4, SLC26A6 and CFTR through dephosphorylation. Mediates the induction of SLC9A3 surface expression produced by Angiotensin-2. Depending on the cell type, activates SLC9A3 in response to calcium or reverses SLC9A3R2-dependent calcium inhibition. May modulate the polyadenylation state of specific mRNAs, both by controlling the subcellular location of FIP1L1 and by inhibiting PAPOLA activity, in response to a stimulus that alters its phosphorylation state. Acts as a (dATP)-dependent inhibitor of ribonucleotide reductase large subunit RRM1, controlling the endogenous dNTP pool and ensuring normal cell cycle progression. In vitro does not exhibit any S-adenosyl-L-homocysteine hydrolase activity. In Homo sapiens (Human), this protein is S-adenosylhomocysteine hydrolase-like protein 1.